A 221-amino-acid chain; its full sequence is Eukaryotic translation initiation factor 4E-2 (221 aa).

Over residues 1 to 20 the composition is skewed to basic and acidic residues; it reads MADELNKAALEEYKSSSVED. Residues 1–36 are disordered; that stretch reads MADELNKAALEEYKSSSVEDRGEEGEIVGESDDTAS. Residues 21 to 33 show a composition bias toward acidic residues; it reads RGEEGEIVGESDD. 2 EIF4G-binding regions span residues 46–49 and 56–92; these read HPLE and FDNP…NNIH. Residues 64 to 69, Lys-96, and 114 to 115 contribute to the mRNA site; these read KQAAWG and WE. The cysteines at positions 119 and 157 are disulfide-linked. Residues 140–149 are EIF4G-binding; that stretch reads YTLLALIGEQ. Residues 164-169 and 209-213 contribute to the mRNA site; these read RVRQEK and KKLDR.

It belongs to the eukaryotic initiation factor 4E family. In terms of assembly, EIF4F is a multi-subunit complex, the composition of which varies with external and internal environmental conditions. It is composed of at least EIF4A, EIF4E and EIF4G. EIF4E is also known to interact with other partners. In higher plants two isoforms of EIF4F have been identified, named isoform EIF4F and isoform EIF(iso)4F. Isoform EIF4F has subunits p220 and p26, whereas isoform EIF(iso)4F has subunits p82 and p28. As to quaternary structure, (Microbial infection) Interacts with potyvirus viral genome-linked protein (VPg) in the nucleus; mostly potato virus Y (PVY-LYE84) and tobacco etch virus (TEV-HAT) VPg, but not with PVY-LYE90 and pepper mottle virus (PepMoV) VPg; these interactions are possible in susceptible hosts but impaired in resistant plants. In terms of processing, according to the redox status, the Cys-119-Cys-157 disulfide bridge may have a role in regulating protein function by affecting its ability to bind capped mRNA.

It is found in the nucleus. Its subcellular location is the cytoplasm. In terms of biological role, component of the protein complex eIF4F, which is involved in the recognition of the mRNA cap, ATP-dependent unwinding of 5'-terminal secondary structure and recruitment of mRNA to the ribosome. Recognizes and binds the 7-methylguanosine-containing mRNA cap during an early step in the initiation of protein synthesis and facilitates ribosome binding by inducing the unwinding of the mRNAs secondary structures. Key component of recessive resistance to potyviruses. (Microbial infection) Susceptibility host factor required for viral infection (e.g. potato virus Y (PVY) and tobacco etch virus (TEV)) by recruiting viral RNAs to the host ribosomal complex via an interaction with viral genome-linked protein (VPg). This Solanum lycopersicum (Tomato) protein is Eukaryotic translation initiation factor 4E-2.